We begin with the raw amino-acid sequence, 278 residues long: Putative cuticle collagen 91 (278 aa).

2 disordered regions span residues 84 to 109 (LAKN…GVDG) and 140 to 278 (GPAG…SVRQ). A compositionally biased stretch (pro residues) spans 89–98 (PPGPPGPPGA). Triple-helical region stretches follow at residues 91–120 (GPPG…DGVA), 137–199 (GEAG…NGQR), and 202–264 (GTPG…PGPD). Over residues 99 to 109 (PGAAGEPGVDG) the composition is skewed to low complexity. Residues 158-167 (GADGQGGAPG) are compositionally biased toward gly residues. Low complexity-rich tracts occupy residues 172-228 (EGPA…AGAP) and 236-245 (APGVDGQPGA).

It belongs to the cuticular collagen family. As to quaternary structure, collagen polypeptide chains are complexed within the cuticle by disulfide bonds and other types of covalent cross-links.

In terms of biological role, nematode cuticles are composed largely of collagen-like proteins. The cuticle functions both as an exoskeleton and as a barrier to protect the worm from its environment. This chain is Putative cuticle collagen 91 (col-91), found in Caenorhabditis elegans.